The primary structure comprises 241 residues: Small ribosomal subunit protein uS3 (241 aa).

A KH type-2 domain is found at 39–107; sequence IRTYLKKELY…PLSVNIKEEK (69 aa). The disordered stretch occupies residues 214 to 241; that stretch reads AEVKEEQQKEGARRPKRAPKRENSGKAE. Residues 215–226 show a composition bias toward basic and acidic residues; it reads EVKEEQQKEGAR.

It belongs to the universal ribosomal protein uS3 family. Part of the 30S ribosomal subunit. Forms a tight complex with proteins S10 and S14.

In terms of biological role, binds the lower part of the 30S subunit head. Binds mRNA in the 70S ribosome, positioning it for translation. The sequence is that of Small ribosomal subunit protein uS3 from Sulfurimonas denitrificans (strain ATCC 33889 / DSM 1251) (Thiomicrospira denitrificans (strain ATCC 33889 / DSM 1251)).